We begin with the raw amino-acid sequence, 183 residues long: Streptavidin (183 aa).

A signal peptide spans Met1–Ala24. Positions Ala37–Pro159 constitute an Avidin-like domain. 2 residues coordinate biotin: Tyr67 and Tyr78. Positions Arg83–Asp85 match the Cell attachment site; atypical motif. The biotin site is built by Trp116, Trp132, and Trp144.

It belongs to the avidin/streptavidin family. As to quaternary structure, homotetramer.

The protein localises to the secreted. Its function is as follows. The biological function of streptavidin is not known. Forms a strong non-covalent specific complex with biotin (one molecule of biotin per subunit of streptavidin). The polypeptide is Streptavidin (Streptomyces avidinii).